The primary structure comprises 60 residues: Large ribosomal subunit protein bL32 (60 aa).

The protein belongs to the bacterial ribosomal protein bL32 family.

The polypeptide is Large ribosomal subunit protein bL32 (Streptococcus pneumoniae serotype 19F (strain G54)).